A 177-amino-acid chain; its full sequence is MVKEIARKIEIPEGISVSFSQDDVFTATGPLGTVERKLWYPGIKIYVRDGEVEVDAESSRKEQKAMVGTFTSHIKNLMKGVNEGFECKMTILYAHFPMQVKVDGKTLIIGNFLGEKKPRIAKILGETKVKVSGNEVTVSGINKEDVGQTAANIEQKTKIKRFDPRIFQDGIYIVQKP.

The protein belongs to the universal ribosomal protein uL6 family. In terms of assembly, part of the 50S ribosomal subunit.

Functionally, this protein binds to the 23S rRNA, and is important in its secondary structure. It is located near the subunit interface in the base of the L7/L12 stalk, and near the tRNA binding site of the peptidyltransferase center. The sequence is that of Large ribosomal subunit protein uL6 from Methanosarcina barkeri (strain Fusaro / DSM 804).